The following is a 357-amino-acid chain: 39 kDa FK506-binding nuclear protein (357 aa).

Ser-92 carries the post-translational modification Phosphoserine. A disordered region spans residues 113–251 (KNSKKSEDDE…ASKDPRTITG (139 aa)). Acidic residues predominate over residues 120-182 (DDEDENESGE…QDSDDSEAEE (63 aa)). Phosphoserine occurs at positions 193 and 197. A compositionally biased stretch (basic and acidic residues) spans 222-237 (EKPEAKKEQPKAKEPA). The 89-residue stretch at 269–357 (GKRVSVYYIG…VFEVELKAVH (89 aa)) folds into the PPIase FKBP-type domain.

It belongs to the FKBP-type PPIase family. Ubiquitously expressed, highest levels in ovary.

The protein localises to the nucleus. The catalysed reaction is [protein]-peptidylproline (omega=180) = [protein]-peptidylproline (omega=0). Its function is as follows. PPIases accelerate the folding of proteins. May function in a signal transduction cascade during early development. The polypeptide is 39 kDa FK506-binding nuclear protein (Drosophila melanogaster (Fruit fly)).